Here is a 213-residue protein sequence, read N- to C-terminus: Probable transaldolase (213 aa).

The active-site Schiff-base intermediate with substrate is the Lys-83.

Belongs to the transaldolase family. Type 3B subfamily.

Its subcellular location is the cytoplasm. It catalyses the reaction D-sedoheptulose 7-phosphate + D-glyceraldehyde 3-phosphate = D-erythrose 4-phosphate + beta-D-fructose 6-phosphate. It participates in carbohydrate degradation; pentose phosphate pathway; D-glyceraldehyde 3-phosphate and beta-D-fructose 6-phosphate from D-ribose 5-phosphate and D-xylulose 5-phosphate (non-oxidative stage): step 2/3. Transaldolase is important for the balance of metabolites in the pentose-phosphate pathway. This Geobacillus sp. (strain WCH70) protein is Probable transaldolase.